The primary structure comprises 1893 residues: Plexin-A4 (1893 aa).

An N-terminal signal peptide occupies residues 1 to 23 (MKAMPWNWTCLLSHLLVVGMGSS). A Sema domain is found at 24–506 (TLLPRQPPQL…SERQLTRVPV (483 aa)). The Extracellular portion of the chain corresponds to 24-1236 (TLLPRQPPQL…IAPDSPLSLP (1213 aa)). 10 disulfide bridges follow: Cys94-Cys103, Cys129-Cys137, Cys283-Cys404, Cys299-Cys355, Cys373-Cys392, Cys509-Cys526, Cys515-Cys557, Cys518-Cys535, Cys529-Cys541, and Cys592-Cys611. In terms of domain architecture, PSI 1 spans 508 to 558 (SCGQYRSCGECLGSGDPHCGWCVLHNTCTRKERCERSREPRRFASEMKQCV). N-linked (GlcNAc...) asparagine glycosylation occurs at Asn654. 2 PSI domains span residues 654-701 (NCSV…EDCP) and 802-855 (KCGA…SKCT). IPT/TIG domains lie at 857 to 951 (PRIT…YYFM), 953 to 1036 (LTLA…FQYV), 1039 to 1138 (PTIV…FTYY), and 1141 to 1229 (PVFE…YIAP). Asn1006, Asn1131, and Asn1179 each carry an N-linked (GlcNAc...) asparagine glycan. A helical membrane pass occupies residues 1237-1257 (AIVSIAVAGGLLIIFIVAVLI). Topologically, residues 1258–1893 (AYKRKSRESD…QVITLMSLDS (636 aa)) are cytoplasmic. Lys1349 bears the N6-acetyllysine mark.

Belongs to the plexin family. As to quaternary structure, interacts with NRP1 and NRP2. In terms of tissue distribution, expressed in the developing nervous system. Widely expressed in both the central and peripheral nervous systems. Expressed in the peripheral ganglia, somatosensory, olfactory, visual, auditory and equilibrium systems.

It is found in the cell membrane. Functionally, coreceptor for SEMA3A. Necessary for signaling by class 3 semaphorins and subsequent remodeling of the cytoskeleton. Plays a role in axon guidance in the developing nervous system. Class 3 semaphorins bind to a complex composed of a neuropilin and a plexin. The plexin modulates the affinity of the complex for specific semaphorins, and its cytoplasmic domain is required for the activation of down-stream signaling events in the cytoplasm. This Mus musculus (Mouse) protein is Plexin-A4 (Plxna4).